Here is a 380-residue protein sequence, read N- to C-terminus: Putative glutamate--cysteine ligase 2-2 (380 aa).

This sequence belongs to the glutamate--cysteine ligase type 2 family. YbdK subfamily.

It catalyses the reaction L-cysteine + L-glutamate + ATP = gamma-L-glutamyl-L-cysteine + ADP + phosphate + H(+). In terms of biological role, ATP-dependent carboxylate-amine ligase which exhibits weak glutamate--cysteine ligase activity. The sequence is that of Putative glutamate--cysteine ligase 2-2 from Nocardia farcinica (strain IFM 10152).